Consider the following 231-residue polypeptide: Phosphoribosylformylglycinamidine synthase subunit PurQ (231 aa).

Positions 7–231 constitute a Glutamine amidotransferase type-1 domain; sequence GVVVFPGSNC…RLFASLFRQL (225 aa). Catalysis depends on cysteine 89, which acts as the Nucleophile. Active-site residues include histidine 206 and glutamate 208.

As to quaternary structure, part of the FGAM synthase complex composed of 1 PurL, 1 PurQ and 2 PurS subunits.

The protein localises to the cytoplasm. The enzyme catalyses N(2)-formyl-N(1)-(5-phospho-beta-D-ribosyl)glycinamide + L-glutamine + ATP + H2O = 2-formamido-N(1)-(5-O-phospho-beta-D-ribosyl)acetamidine + L-glutamate + ADP + phosphate + H(+). It catalyses the reaction L-glutamine + H2O = L-glutamate + NH4(+). It participates in purine metabolism; IMP biosynthesis via de novo pathway; 5-amino-1-(5-phospho-D-ribosyl)imidazole from N(2)-formyl-N(1)-(5-phospho-D-ribosyl)glycinamide: step 1/2. Part of the phosphoribosylformylglycinamidine synthase complex involved in the purines biosynthetic pathway. Catalyzes the ATP-dependent conversion of formylglycinamide ribonucleotide (FGAR) and glutamine to yield formylglycinamidine ribonucleotide (FGAM) and glutamate. The FGAM synthase complex is composed of three subunits. PurQ produces an ammonia molecule by converting glutamine to glutamate. PurL transfers the ammonia molecule to FGAR to form FGAM in an ATP-dependent manner. PurS interacts with PurQ and PurL and is thought to assist in the transfer of the ammonia molecule from PurQ to PurL. In Chlorobium luteolum (strain DSM 273 / BCRC 81028 / 2530) (Pelodictyon luteolum), this protein is Phosphoribosylformylglycinamidine synthase subunit PurQ.